The chain runs to 630 residues: Beta-phellandrene synthase, chloroplastic (630 aa).

The transit peptide at M1–S48 directs the protein to the chloroplast. Residues D381, D385, and D533 each contribute to the Mg(2+) site. Residues D381 to D385 carry the DDXXD motif motif.

The protein belongs to the terpene synthase family. Tpsd subfamily. Mg(2+) serves as cofactor. Mn(2+) is required as a cofactor. Requires K(+) as cofactor.

The protein resides in the plastid. It localises to the chloroplast. It catalyses the reaction (2E)-geranyl diphosphate = (-)-beta-phellandrene + diphosphate. It functions in the pathway terpene metabolism; oleoresin biosynthesis. Converts geranyl diphosphate to four products with (-)-(4S)-beta-phellandrene (52%) as the major olefin, and lesser amounts of (-)-(1S,5S)-beta-pinene (34%), (-)-1S,5S-alpha-pinene (8.5%), and (-)-(4S)-limonene (6%). Involved in defensive oleoresin formation in conifers in response to insect attack or other injury. Involved in monoterpene (C10) olefins biosynthesis. This Abies grandis (Grand fir) protein is Beta-phellandrene synthase, chloroplastic (ag8).